The primary structure comprises 226 residues: Large ribosomal subunit protein mL67 (226 aa).

Belongs to the mitochondrion-specific ribosomal protein mL67 family. In terms of assembly, component of the mitochondrial large ribosomal subunit (mt-LSU). Mature yeast 74S mitochondrial ribosomes consist of a small (37S) and a large (54S) subunit. The 37S small subunit contains a 15S ribosomal RNA (15S mt-rRNA) and 34 different proteins. The 54S large subunit contains a 21S rRNA (21S mt-rRNA) and 46 different proteins.

The protein resides in the nucleus. It localises to the mitochondrion. Component of the mitochondrial ribosome (mitoribosome), a dedicated translation machinery responsible for the synthesis of mitochondrial genome-encoded proteins, including at least some of the essential transmembrane subunits of the mitochondrial respiratory chain. The mitoribosomes are attached to the mitochondrial inner membrane and translation products are cotranslationally integrated into the membrane. mL67/MHR1 also has extraribosomal functions, being involved in regulation of mitochondrial DNA recombination, maintenance and repair, and generation of homoplasmic cells. mL67/MHR1 also acts as transcription factor involved in regulation of RNA polymerase II-dependent transcription. The protein is Large ribosomal subunit protein mL67 (MHR1) of Saccharomyces cerevisiae (strain ATCC 204508 / S288c) (Baker's yeast).